We begin with the raw amino-acid sequence, 369 residues long: Glycolate oxidase (369 aa).

Met-1 is subject to N-acetylmethionine. The 359-residue stretch at 1–359 folds into the FMN hydroxy acid dehydrogenase domain; it reads MEITNVNEYE…SRSHIAADWD (359 aa). Tyr-24 provides a ligand contact to glyoxylate. FMN is bound by residues 77-79, Ser-106, 127-129, and Thr-155; these read PTA and QLY. Tyr-129 is a binding site for glyoxylate. Position 164 (Arg-164) interacts with glyoxylate. Lys-230 and Ser-252 together coordinate FMN. Positions 254 and 257 each coordinate glyoxylate. His-254 acts as the Proton acceptor in catalysis. Residues 285 to 289 and 308 to 309 each bind FMN; these read DGGVR and GR. Residues 367 to 369 carry the Microbody targeting signal motif; sequence ARL.

Belongs to the FMN-dependent alpha-hydroxy acid dehydrogenase family. As to quaternary structure, homotetramer. FMN serves as cofactor.

It is found in the peroxisome. It carries out the reaction glycolate + O2 = glyoxylate + H2O2. The enzyme catalyses a (2S)-2-hydroxycarboxylate + O2 = a 2-oxocarboxylate + H2O2. Its pathway is photosynthesis; photorespiration; glycine from 2-phosphoglycolate: step 2/3. Catalyzes the oxidation of glycolate to glyoxylate, with a reduction of O2 to H2O2. Is a key enzyme in photorespiration in green plants. To a lesser extent, is also able to use L-lactate and 2-hydroxbyutanoate as substrate in vitro, but shows almost no activity with L-mandelate. In Spinacia oleracea (Spinach), this protein is Glycolate oxidase.